Consider the following 583-residue polypeptide: Orphan steroid hormone receptor 2 (583 aa).

Residues 84–159 (IELCAVCGDK…MGMKSDSVQC (76 aa)) constitute a DNA-binding region (nuclear receptor). NR C4-type zinc fingers lie at residues 87–107 (CAVC…CEGC) and 123–142 (CRGN…CQYC). One can recognise an NR LBD domain in the interval 248–563 (TLASVVTSLA…SIIPYILRME (316 aa)).

Belongs to the nuclear hormone receptor family. NR2 subfamily. Binds DNA as a monomer. In terms of tissue distribution, expressed uniformly in the early embryo. In contrast, larval expression is localized to the epaulettes and mouth epithelium. Expressed in multiple adult organs including lantern muscle, tubefeet, intestine, coelomocytes and gonads. In the adult ovaries and testes, expression is specifically localized to the smooth muscle epithelial layer of cells which surround the ovarioles and acini, respectively (at protein level).

The protein localises to the cytoplasm. Its subcellular location is the nucleus. Its function is as follows. Orphan nuclear receptor. Binds to the hormone response element in the upstream promoter region of the CYIIIB gene in vitro. Both isoform 1 and isoform 2 bind DNA. The polypeptide is Orphan steroid hormone receptor 2 (Strongylocentrotus purpuratus (Purple sea urchin)).